We begin with the raw amino-acid sequence, 537 residues long: Arginine--tRNA ligase (537 aa).

Residues 113–123 carry the 'HIGH' region motif; it reads ANPTGRIHLGH.

The protein belongs to the class-I aminoacyl-tRNA synthetase family. As to quaternary structure, monomer.

Its subcellular location is the cytoplasm. The enzyme catalyses tRNA(Arg) + L-arginine + ATP = L-arginyl-tRNA(Arg) + AMP + diphosphate. The protein is Arginine--tRNA ligase (argS) of Mycoplasma genitalium (strain ATCC 33530 / DSM 19775 / NCTC 10195 / G37) (Mycoplasmoides genitalium).